Consider the following 264-residue polypeptide: Thymidylate synthase (264 aa).

DUMP is bound at residue Arg-21. Position 51 (His-51) interacts with (6R)-5,10-methylene-5,6,7,8-tetrahydrofolate. Residue 126 to 127 participates in dUMP binding; that stretch reads RR. Cys-146 acts as the Nucleophile in catalysis. DUMP contacts are provided by residues 166–169, Asn-177, and 207–209; these read RSAD and HLY. Asp-169 is a (6R)-5,10-methylene-5,6,7,8-tetrahydrofolate binding site. Ala-263 is a (6R)-5,10-methylene-5,6,7,8-tetrahydrofolate binding site.

Belongs to the thymidylate synthase family. Bacterial-type ThyA subfamily. Homodimer.

The protein resides in the cytoplasm. It catalyses the reaction dUMP + (6R)-5,10-methylene-5,6,7,8-tetrahydrofolate = 7,8-dihydrofolate + dTMP. It participates in pyrimidine metabolism; dTTP biosynthesis. Functionally, catalyzes the reductive methylation of 2'-deoxyuridine-5'-monophosphate (dUMP) to 2'-deoxythymidine-5'-monophosphate (dTMP) while utilizing 5,10-methylenetetrahydrofolate (mTHF) as the methyl donor and reductant in the reaction, yielding dihydrofolate (DHF) as a by-product. This enzymatic reaction provides an intracellular de novo source of dTMP, an essential precursor for DNA biosynthesis. This chain is Thymidylate synthase, found in Stutzerimonas stutzeri (strain A1501) (Pseudomonas stutzeri).